Reading from the N-terminus, the 214-residue chain is tRNA (guanine-N(7)-)-methyltransferase (214 aa).

Positions 44, 69, 96, and 118 each coordinate S-adenosyl-L-methionine. The active site involves aspartate 118. Residues lysine 122, aspartate 154, and 191 to 194 each bind substrate; that span reads TEYE.

This sequence belongs to the class I-like SAM-binding methyltransferase superfamily. TrmB family.

It carries out the reaction guanosine(46) in tRNA + S-adenosyl-L-methionine = N(7)-methylguanosine(46) in tRNA + S-adenosyl-L-homocysteine. It functions in the pathway tRNA modification; N(7)-methylguanine-tRNA biosynthesis. Its function is as follows. Catalyzes the formation of N(7)-methylguanine at position 46 (m7G46) in tRNA. This Listeria welshimeri serovar 6b (strain ATCC 35897 / DSM 20650 / CCUG 15529 / CIP 8149 / NCTC 11857 / SLCC 5334 / V8) protein is tRNA (guanine-N(7)-)-methyltransferase.